Here is a 229-residue protein sequence, read N- to C-terminus: Cytidylate kinase (229 aa).

An ATP-binding site is contributed by 10 to 18; sequence GFSSCGKST.

It belongs to the cytidylate kinase family. Type 1 subfamily.

It localises to the cytoplasm. The enzyme catalyses CMP + ATP = CDP + ADP. It carries out the reaction dCMP + ATP = dCDP + ADP. The protein is Cytidylate kinase of Bacteroides fragilis (strain ATCC 25285 / DSM 2151 / CCUG 4856 / JCM 11019 / LMG 10263 / NCTC 9343 / Onslow / VPI 2553 / EN-2).